A 92-amino-acid polypeptide reads, in one-letter code: Small ribosomal subunit protein uS19 (92 aa).

It belongs to the universal ribosomal protein uS19 family.

Protein S19 forms a complex with S13 that binds strongly to the 16S ribosomal RNA. In Proteus mirabilis (strain HI4320), this protein is Small ribosomal subunit protein uS19.